A 303-amino-acid polypeptide reads, in one-letter code: Polyisoprenyl-teichoic acid--peptidoglycan teichoic acid transferase TagU (303 aa).

The Cytoplasmic portion of the chain corresponds to 1–6 (MSKGKK). A helical; Signal-anchor for type II membrane protein membrane pass occupies residues 7 to 27 (IFAIIFGIILVLFLAVVGMGA). The Extracellular portion of the chain corresponds to 28–303 (KLYWDVSKSM…QELKNQLNTK (276 aa)).

Belongs to the LytR/CpsA/Psr (LCP) family.

The protein resides in the cell membrane. It participates in cell wall biogenesis. May catalyze the final step in cell wall teichoic acid biosynthesis, the transfer of the anionic cell wall polymers (APs) from their lipid-linked precursor to the cell wall peptidoglycan (PG). This chain is Polyisoprenyl-teichoic acid--peptidoglycan teichoic acid transferase TagU, found in Enterococcus faecalis (strain ATCC 700802 / V583).